The sequence spans 475 residues: Pregnancy-specific glycoprotein 22 (475 aa).

Residues 1–35 (MEVSSELLSNGWTSWQRVLLTASLLTCWLLPITAG) form the signal peptide. Ig-like V-type domains lie at 44-140 (KLVE…FLQV), 162-260 (PASV…YLQV), and 280-380 (PVPP…QVNV). Residues N103, N110, and N231 are each glycosylated (N-linked (GlcNAc...) asparagine). Residues 387–471 (PVMRVTDSTV…SKTSLPVRLT (85 aa)) enclose the Ig-like C2-type domain. The cysteines at positions 406 and 454 are disulfide-linked.

The protein belongs to the immunoglobulin superfamily. CEA family.

The protein resides in the secreted. Functionally, may have an angiogenic function during early placental development. Binds to cell-surface heparan sulfate proteoglycans (HSPGs), and stimulates secretion of the proangiogenic factors VEGFA and TGFB from uterine dendritic cells and natural killer cells. Also induces endothelial tube formation in vitro. The sequence is that of Pregnancy-specific glycoprotein 22 from Mus musculus (Mouse).